Reading from the N-terminus, the 247-residue chain is Carboxy-S-adenosyl-L-methionine synthase (247 aa).

S-adenosyl-L-methionine contacts are provided by residues Tyr40, 65–67 (GCS), 90–91 (DN), 122–123 (DI), Asn137, and Arg204.

This sequence belongs to the class I-like SAM-binding methyltransferase superfamily. Cx-SAM synthase family. Homodimer.

The catalysed reaction is prephenate + S-adenosyl-L-methionine = carboxy-S-adenosyl-L-methionine + 3-phenylpyruvate + H2O. Functionally, catalyzes the conversion of S-adenosyl-L-methionine (SAM) to carboxy-S-adenosyl-L-methionine (Cx-SAM). The polypeptide is Carboxy-S-adenosyl-L-methionine synthase (Stutzerimonas stutzeri (strain A1501) (Pseudomonas stutzeri)).